Consider the following 488-residue polypeptide: MNTIASVTLPHHVHAPRYDRQQLQSRIVHFGFGAFHRAHQALLTDRVLNAQGGDWGICEISLFSGDQLMSQLRAQNHLYTVLEKGADGNQVIIVGAVHECLNAKLDSLAAIIEKFCEPQVAIVSLTITEKGYCIDPATGALDTSNPRIIHDLQTPEEPHSAPGILVEALKRRRERGLTPFTVLSCDNIPDNGHVVKNAVLGMAEKRSPELAGWIKEHVSFPGTMVDRIVPAATDESLVEISQHLGVNDPCAISCEPFIQWVVEDNFVAGRPAWEVAGVQMVNDVLPWEEMKLRMLNGSHSFLAYLGYLSGFAHISDCMQDRAFRHAARTLMLDEQAPTLQIKDVDLTQYADKLIARFANPALKHKTWQIAMDGSQKLPQRMLAGIRIHQGRETDWSLLALGVAGWMRYVSGVDDAGNAIDVRDPLSDKIRELVAGSSSEQRVTALLSLREVFGDDLPDNPHFVQAIEQAWQQIVQFGAHQALLNTLKI.

27–38 (IVHFGFGAFHRA) serves as a coordination point for NAD(+).

The protein belongs to the mannitol dehydrogenase family. UxuB subfamily.

This is an uncharacterized protein from Escherichia coli (strain K12).